A 257-amino-acid polypeptide reads, in one-letter code: Pyridoxal phosphate homeostasis protein (257 aa).

At lysine 47 the chain carries N6-(pyridoxal phosphate)lysine.

Belongs to the pyridoxal phosphate-binding protein YggS/PROSC family.

In terms of biological role, pyridoxal 5'-phosphate (PLP)-binding protein, which is involved in PLP homeostasis. The protein is Pyridoxal phosphate homeostasis protein of Mycobacterium leprae (strain TN).